The chain runs to 227 residues: Cytochrome c oxidase subunit 2 (227 aa).

Residues 1-22 (MAYPFQLGLQDATSPIMEELMN) are Mitochondrial intermembrane-facing. Residues 23-44 (FHDHTLMIVFLISSLVLYIISL) traverse the membrane as a helical segment. The Mitochondrial matrix segment spans residues 45–60 (MLTTKLTHTSTMDAQE). The chain crosses the membrane as a helical span at residues 61–81 (VETIWTILPAVILIMIALPSL). Over 82-227 (RILYMMDEIN…YFENWSASMI (146 aa)) the chain is Mitochondrial intermembrane. Cu cation contacts are provided by histidine 161, cysteine 196, glutamate 198, cysteine 200, histidine 204, and methionine 207. Glutamate 198 provides a ligand contact to Mg(2+). Tyrosine 218 carries the post-translational modification Phosphotyrosine.

Belongs to the cytochrome c oxidase subunit 2 family. Component of the cytochrome c oxidase (complex IV, CIV), a multisubunit enzyme composed of 14 subunits. The complex is composed of a catalytic core of 3 subunits MT-CO1, MT-CO2 and MT-CO3, encoded in the mitochondrial DNA, and 11 supernumerary subunits COX4I, COX5A, COX5B, COX6A, COX6B, COX6C, COX7A, COX7B, COX7C, COX8 and NDUFA4, which are encoded in the nuclear genome. The complex exists as a monomer or a dimer and forms supercomplexes (SCs) in the inner mitochondrial membrane with NADH-ubiquinone oxidoreductase (complex I, CI) and ubiquinol-cytochrome c oxidoreductase (cytochrome b-c1 complex, complex III, CIII), resulting in different assemblies (supercomplex SCI(1)III(2)IV(1) and megacomplex MCI(2)III(2)IV(2)). Found in a complex with TMEM177, COA6, COX18, COX20, SCO1 and SCO2. Interacts with TMEM177 in a COX20-dependent manner. Interacts with COX20. Interacts with COX16. The cofactor is Cu cation.

The protein localises to the mitochondrion inner membrane. The enzyme catalyses 4 Fe(II)-[cytochrome c] + O2 + 8 H(+)(in) = 4 Fe(III)-[cytochrome c] + 2 H2O + 4 H(+)(out). In terms of biological role, component of the cytochrome c oxidase, the last enzyme in the mitochondrial electron transport chain which drives oxidative phosphorylation. The respiratory chain contains 3 multisubunit complexes succinate dehydrogenase (complex II, CII), ubiquinol-cytochrome c oxidoreductase (cytochrome b-c1 complex, complex III, CIII) and cytochrome c oxidase (complex IV, CIV), that cooperate to transfer electrons derived from NADH and succinate to molecular oxygen, creating an electrochemical gradient over the inner membrane that drives transmembrane transport and the ATP synthase. Cytochrome c oxidase is the component of the respiratory chain that catalyzes the reduction of oxygen to water. Electrons originating from reduced cytochrome c in the intermembrane space (IMS) are transferred via the dinuclear copper A center (CU(A)) of subunit 2 and heme A of subunit 1 to the active site in subunit 1, a binuclear center (BNC) formed by heme A3 and copper B (CU(B)). The BNC reduces molecular oxygen to 2 water molecules using 4 electrons from cytochrome c in the IMS and 4 protons from the mitochondrial matrix. This Mus musculus (Mouse) protein is Cytochrome c oxidase subunit 2 (Mtco2).